The primary structure comprises 1806 residues: MTETLKARLEFPNSLIQAQAVRTLVAAVLKEKGQNEKICQTSTKGPALESLWEQCSSDSTVVRSACCNALVLLVEQGHADLPYVLNTTLNLLPSARNVQGLIKVVGRLLQIQAGQRENRASFTCPYSIRSFPHPYITVLENRPDCWPALLQEIDDFLQLATDKDEPVFVEMLVPFLRYLYCEPQRLSENALLRQSLLRVLLQPREAPESDRLEEKGASSTRVVRELIRSLFDLLPHMLVDSVTAVVELSSFAESLTAALISHPELWRKELTRLALQLLCACQLTIHLGGELMSLLHTLHHIIPAHAEELPAEQVIMGISLLLLNASVSQQTALLDLAVKIVPPELPPPWGASLLVMPLLHVLSCSSLMEALTDTQTHTKNQKLANSLLQTVQREPARRKEDSMQLDLPLSTWYSELQVAVSVLHRVSTDSTSSSEWLYSLQSSLSVCENVPDTVCLLVSHLIFRSDGDLCRLALETAAAIAEADPAKVPCLLPVLMFKLSRVSDPALSLSVLYTLPKLGTHKLCIPQVLHVLQTVGSSSRLRPVALRLLALLWKKQDRVYPDLQRLMCQLDKSSVVMGKDTQWEQILARAACVRDICRERPYQHGGDMLAAIRDTLLQFSRKDQATPVALALQALQELCRAEVVDICSTWKALSPKLLSDTRPLVLKATAELLALVPDLNVKTEEYEKFGSEAVGVLWGYALSQDSVVASQGFKALSEYPESSHTILHLPEQARPIPKQPEVEDEVKQNEEENEEEEDISVPGASYVKLVSLTSLSVLPALETFLTALVRQEMKQMPRGVYHSALTGGNLRSDQGKTVSGIPSFMLKMYEKNKQPGLKPGLAAGLLLCYDLPVQTDKDGRPIIRFLVSRGRSYQQMLATFIHEVNIQPSEWHRSLLLPQAWRGFMSRAFHALLQGRKAELEMLQKQGKESPEELQYQQHYAWLWVRDRLTDVVKSAAKDSPVVQGNSILALSGLAVVLTRYESNLPAQSESGPEAGPDIFPTVHWLSMVIDTLLSIVSSNSNPKAQVFPWFVHRSYSGENTASVIARSCAALGLALLVPVLVTWRRDSIPSILGTLEAGLPGSATADESQALQFHSGLALGMFLAWLLDERVSDISGQSVAELLMKHLKRLEVCCFDPNLEYNAGCVLGVGLVLSSLSSSSQCERDRVHVSHTLDRLLQSLQDSSNNSRMMQEVVAYSVACVGVSAFSAGIIEASKAEESMNTLRALTEESQQTPGFALALGQTVFGLSSFGHGKAVDIQPRLLAAWTKILLAEGCPTMQRLSALNGLIALVGSETALIQMKSECEETSLQHSRLNEVIRAITQIITFSGTIGLQSNGACLLGHLHLTHASSRHSRTAVPQDFGYLSESSVIRASVDFITEAGRKGPEFTAPQRVKTLLSALAAVGADFQYPPVNWSSVLSPLMRLGFGEEVQHYCLELAASQTQSSQSASLFLGVWLVPPLVHSLSLRTRAHLYESLSCWMKHVAEDKLQVYVDSLAVQQFEPLTRLQRLSLCLSILHGLSRAMTAPNPPQNCWSVLCSTAEKIYNLLPDSIPAAEVALYEAMCSCLSEMSDAEIDRIVKVSEANVEKTAFILSYLVSKGRVPLLGLNDVISTILQVGSKRPISWLLLQGLHQSRFASGPNTGVSKRMEWLLELMGHIRNVAYGSPSVKCVDVLQGTDFLLGVFAAAVVSWADHGGPLLVGIRARWFPWPQSAELCHGLYANPEDTELPVASCLLAIPYSIRKLLDKEPWKSQSQKFIDWLFSITEAPKQAFSETAVLTAKAALMALRSSSEFKKKTVWTRAYGW.

The interval 733-760 is disordered; it reads ARPIPKQPEVEDEVKQNEEENEEEEDIS.

Its subcellular location is the cell junction. It localises to the focal adhesion. The protein localises to the cytoplasm. It is found in the cytosol. Its function is as follows. Required for the maintenance of SKIC2 and SKIC3 proteostatic levels in the liver. May be involved in the regulation of RNA degradation by the exosome complex. The polypeptide is Focadhesin (focad) (Danio rerio (Zebrafish)).